We begin with the raw amino-acid sequence, 463 residues long: Methionine aminopeptidase 2-1 (463 aa).

Positions 1–12 are enriched in basic and acidic residues; the sequence is MGSKTPDGHRQG. The disordered stretch occupies residues 1–96; that stretch reads MGSKTPDGHR…SGQQTTPPRV (96 aa). Residues 41-53 are compositionally biased toward acidic residues; that stretch reads SGEDDEDGDDDEE. The segment covering 58-67 has biased composition (polar residues); that stretch reads DLNSRAQPNN. Over residues 70 to 85 the composition is skewed to basic residues; it reads KKRKRKNNKKKKKKRP. Histidine 215 provides a ligand contact to substrate. A divalent metal cation-binding residues include aspartate 236, aspartate 247, and histidine 316. Histidine 324 contacts substrate. A divalent metal cation contacts are provided by glutamate 349 and glutamate 444.

It belongs to the peptidase M24A family. Methionine aminopeptidase eukaryotic type 2 subfamily. It depends on Co(2+) as a cofactor. Requires Zn(2+) as cofactor. The cofactor is Mn(2+). Fe(2+) is required as a cofactor.

The protein localises to the cytoplasm. The enzyme catalyses Release of N-terminal amino acids, preferentially methionine, from peptides and arylamides.. Its function is as follows. Cotranslationally removes the N-terminal methionine from nascent proteins. The N-terminal methionine is often cleaved when the second residue in the primary sequence is small and uncharged (Met-Ala-, Cys, Gly, Pro, Ser, Thr, or Val). The sequence is that of Methionine aminopeptidase 2-1 from Arthroderma otae (strain ATCC MYA-4605 / CBS 113480) (Microsporum canis).